Reading from the N-terminus, the 159-residue chain is Large ribosomal subunit protein uL22 (159 aa).

Residues 129–159 are disordered; the sequence is VEGQQKAKMARQKAVTSVVKAPSKTQGGVQK.

Belongs to the universal ribosomal protein uL22 family. As to quaternary structure, part of the 50S ribosomal subunit.

This protein binds specifically to 23S rRNA; its binding is stimulated by other ribosomal proteins, e.g. L4, L17, and L20. It is important during the early stages of 50S assembly. It makes multiple contacts with different domains of the 23S rRNA in the assembled 50S subunit and ribosome. In terms of biological role, the globular domain of the protein is located near the polypeptide exit tunnel on the outside of the subunit, while an extended beta-hairpin is found that lines the wall of the exit tunnel in the center of the 70S ribosome. The chain is Large ribosomal subunit protein uL22 (rplV) from Mycoplasma pneumoniae (strain ATCC 29342 / M129 / Subtype 1) (Mycoplasmoides pneumoniae).